The chain runs to 118 residues: Putative pterin-4-alpha-carbinolamine dehydratase (118 aa).

The protein belongs to the pterin-4-alpha-carbinolamine dehydratase family.

The catalysed reaction is (4aS,6R)-4a-hydroxy-L-erythro-5,6,7,8-tetrahydrobiopterin = (6R)-L-erythro-6,7-dihydrobiopterin + H2O. The polypeptide is Putative pterin-4-alpha-carbinolamine dehydratase (Pseudomonas fluorescens (strain ATCC BAA-477 / NRRL B-23932 / Pf-5)).